Reading from the N-terminus, the 149-residue chain is MSAYWIAVASAQHVRRGRNDGFMQVNHGKAAPLRRVKPGDGIVYYSPTTILGEKDGLQAFTAIGTVRYGKESPYQGEMGGGFTPFRRDVEWAVAEEAPIKPLLDRLDFTAGKSNWGYHLRFGLFEITDHDFRLIAEAMGAPKTLAEATA.

It belongs to the UPF0310 family.

The chain is UPF0310 protein msl3206 from Mesorhizobium japonicum (strain LMG 29417 / CECT 9101 / MAFF 303099) (Mesorhizobium loti (strain MAFF 303099)).